A 531-amino-acid chain; its full sequence is Light-independent protochlorophyllide reductase subunit B (531 aa).

Aspartate 36 contacts [4Fe-4S] cluster. Aspartate 291 functions as the Proton donor in the catalytic mechanism. Residue 426 to 427 coordinates substrate; the sequence is GL.

This sequence belongs to the ChlB/BchB/BchZ family. In terms of assembly, protochlorophyllide reductase is composed of three subunits; ChlL, ChlN and ChlB. Forms a heterotetramer of two ChlB and two ChlN subunits. Requires [4Fe-4S] cluster as cofactor.

It catalyses the reaction chlorophyllide a + oxidized 2[4Fe-4S]-[ferredoxin] + 2 ADP + 2 phosphate = protochlorophyllide a + reduced 2[4Fe-4S]-[ferredoxin] + 2 ATP + 2 H2O. It participates in porphyrin-containing compound metabolism; chlorophyll biosynthesis (light-independent). In terms of biological role, component of the dark-operative protochlorophyllide reductase (DPOR) that uses Mg-ATP and reduced ferredoxin to reduce ring D of protochlorophyllide (Pchlide) to form chlorophyllide a (Chlide). This reaction is light-independent. The NB-protein (ChlN-ChlB) is the catalytic component of the complex. This chain is Light-independent protochlorophyllide reductase subunit B, found in Prochlorococcus marinus (strain MIT 9211).